A 131-amino-acid chain; its full sequence is Transcription antitermination protein NusB (131 aa).

It belongs to the NusB family.

Its function is as follows. Involved in transcription antitermination. Required for transcription of ribosomal RNA (rRNA) genes. Binds specifically to the boxA antiterminator sequence of the ribosomal RNA (rrn) operons. This Agathobacter rectalis (strain ATCC 33656 / DSM 3377 / JCM 17463 / KCTC 5835 / VPI 0990) (Eubacterium rectale) protein is Transcription antitermination protein NusB.